The chain runs to 198 residues: Suppressor of cytokine signaling 2 (198 aa).

The interval 1–75 (MTLRCLESSG…PEGTFLIRDS (75 aa)) is interaction with AREL1. Positions 6–30 (LESSGNGAEGAQSQWGTAGSAEEPS) are disordered. Residues 8–22 (SSGNGAEGAQSQWGT) are compositionally biased toward polar residues. 2 positions are modified to phosphoserine: S30 and S52. Residues 48–156 (WYWGSMTVNE…TVHLYLTKPL (109 aa)) enclose the SH2 domain. The region spanning 151–197 (YLTKPLYTSAPPLQHLCRLTINKCTSTVWGLPLPTRLKDYLEEYKFQ) is the SOCS box domain. Residue K173 forms a Glycyl lysine isopeptide (Lys-Gly) (interchain with G-Cter in ubiquitin) linkage.

Substrate-recognition component of the ECS(SOCS2) complex, composed of SOCS2, CUL5, ELOB, ELOC and RNF7/RBX2. Interacts with IGF1R. Interacts with DCUN1D1. Ubiquitinated; mediated by AREL1 and leading to its subsequent proteasomal degradation. Ubiquitination is dependent on its phosphorylation at Ser-52, by PKC. Ubiquitination is stimulated by LPS. In terms of processing, phosphorylation at Ser-52 by PKC facilitates its ubiquitination and proteasomal degradation.

Its subcellular location is the cytoplasm. It participates in protein modification; protein ubiquitination. Substrate-recognition component of a cullin-5-RING E3 ubiquitin-protein ligase complex (ECS complex, also named CRL5 complex), which mediates the ubiquitination and subsequent proteasomal degradation of target proteins, such as EPOR and GHR. Specifically recognizes and binds phosphorylated proteins via its SH2 domain, promoting their ubiquitination. The ECS(SOCS2) complex acts as a key regulator of growth hormone receptor (GHR) levels by mediating ubiquitination and degradation of GHR, following GHR phosphorylation by JAK2. The ECS(SOCS2) also catalyzes ubiquitination and degradation of JAK2-phosphorylated EPOR. The chain is Suppressor of cytokine signaling 2 (SOCS2) from Bos taurus (Bovine).